Reading from the N-terminus, the 438-residue chain is Serine hydroxymethyltransferase (438 aa).

Residues Leu-133 and 137–139 each bind (6S)-5,6,7,8-tetrahydrofolate; that span reads GHL. Lys-242 carries the N6-(pyridoxal phosphate)lysine modification.

This sequence belongs to the SHMT family. As to quaternary structure, homodimer. It depends on pyridoxal 5'-phosphate as a cofactor.

The protein localises to the cytoplasm. It catalyses the reaction (6R)-5,10-methylene-5,6,7,8-tetrahydrofolate + glycine + H2O = (6S)-5,6,7,8-tetrahydrofolate + L-serine. It participates in one-carbon metabolism; tetrahydrofolate interconversion. The protein operates within amino-acid biosynthesis; glycine biosynthesis; glycine from L-serine: step 1/1. Its function is as follows. Catalyzes the reversible interconversion of serine and glycine with tetrahydrofolate (THF) serving as the one-carbon carrier. This reaction serves as the major source of one-carbon groups required for the biosynthesis of purines, thymidylate, methionine, and other important biomolecules. Also exhibits THF-independent aldolase activity toward beta-hydroxyamino acids, producing glycine and aldehydes, via a retro-aldol mechanism. The sequence is that of Serine hydroxymethyltransferase from Brucella canis (strain ATCC 23365 / NCTC 10854 / RM-666).